The primary structure comprises 570 residues: Proline--tRNA ligase (570 aa).

It belongs to the class-II aminoacyl-tRNA synthetase family. ProS type 1 subfamily. In terms of assembly, homodimer.

The protein resides in the cytoplasm. The catalysed reaction is tRNA(Pro) + L-proline + ATP = L-prolyl-tRNA(Pro) + AMP + diphosphate. In terms of biological role, catalyzes the attachment of proline to tRNA(Pro) in a two-step reaction: proline is first activated by ATP to form Pro-AMP and then transferred to the acceptor end of tRNA(Pro). As ProRS can inadvertently accommodate and process non-cognate amino acids such as alanine and cysteine, to avoid such errors it has two additional distinct editing activities against alanine. One activity is designated as 'pretransfer' editing and involves the tRNA(Pro)-independent hydrolysis of activated Ala-AMP. The other activity is designated 'posttransfer' editing and involves deacylation of mischarged Ala-tRNA(Pro). The misacylated Cys-tRNA(Pro) is not edited by ProRS. The protein is Proline--tRNA ligase of Pelotomaculum thermopropionicum (strain DSM 13744 / JCM 10971 / SI).